The chain runs to 502 residues: ATP synthase subunit alpha (502 aa).

Residue Gly169–Thr176 participates in ATP binding.

It belongs to the ATPase alpha/beta chains family. F-type ATPases have 2 components, CF(1) - the catalytic core - and CF(0) - the membrane proton channel. CF(1) has five subunits: alpha(3), beta(3), gamma(1), delta(1), epsilon(1). CF(0) has three main subunits: a(1), b(2) and c(9-12). The alpha and beta chains form an alternating ring which encloses part of the gamma chain. CF(1) is attached to CF(0) by a central stalk formed by the gamma and epsilon chains, while a peripheral stalk is formed by the delta and b chains.

The protein resides in the cell inner membrane. It carries out the reaction ATP + H2O + 4 H(+)(in) = ADP + phosphate + 5 H(+)(out). Produces ATP from ADP in the presence of a proton gradient across the membrane. The alpha chain is a regulatory subunit. The protein is ATP synthase subunit alpha of Pelobacter propionicus (strain DSM 2379 / NBRC 103807 / OttBd1).